Here is a 258-residue protein sequence, read N- to C-terminus: MDPIALQAGYDLLGDGRPETLWLGIGTLLMLIGTFYFLVRGWGVTDKDAREYYAVTILVPGIASAAYLSMFFGIGLTEVTVGGEMLDIYYARYADWLFTTPLLLLDLALLAKVDRVTIGTLVGVDALMIVTGLIGALSHTAIARYSWWLFSTICMIVVLYFLATSLRSAAKERGPEVASTFNTLTALVLVLWTAYPILWIIGTEGAGVVGLGIETLLFMVLDVTAKVGFGFILLRSRAILGDTEAPEPSAGADVSAAD.

The propeptide occupies 1 to 6; that stretch reads MDPIAL. Pyrrolidone carboxylic acid is present on glutamine 7. Topologically, residues 7–18 are extracellular; the sequence is QAGYDLLGDGRP. Residues 19 to 40 form a helical membrane-spanning segment; the sequence is ETLWLGIGTLLMLIGTFYFLVR. The Cytoplasmic portion of the chain corresponds to 41–49; it reads GWGVTDKDA. Residues 50 to 71 form a helical membrane-spanning segment; sequence REYYAVTILVPGIASAAYLSMF. Over 72–89 the chain is Extracellular; that stretch reads FGIGLTEVTVGGEMLDIY. A helical membrane pass occupies residues 90–111; that stretch reads YARYADWLFTTPLLLLDLALLA. The Cytoplasmic segment spans residues 112 to 114; it reads KVD. A helical transmembrane segment spans residues 115-137; it reads RVTIGTLVGVDALMIVTGLIGAL. Residues 138–141 lie on the Extracellular side of the membrane; the sequence is SHTA. A helical membrane pass occupies residues 142–170; the sequence is IARYSWWLFSTICMIVVLYFLATSLRSAA. Topologically, residues 171–173 are cytoplasmic; sequence KER. The chain crosses the membrane as a helical span at residues 174-202; sequence GPEVASTFNTLTALVLVLWTAYPILWIIG. At 203–210 the chain is on the extracellular side; sequence TEGAGVVG. A helical membrane pass occupies residues 211-243; sequence LGIETLLFMVLDVTAKVGFGFILLRSRAILGDT. Lysine 226 is subject to N6-(retinylidene)lysine. The Cytoplasmic segment spans residues 244–258; the sequence is EAPEPSAGADVSAAD.

The protein belongs to the archaeal/bacterial/fungal opsin family.

The protein resides in the cell membrane. In terms of biological role, light-driven proton pump. This chain is Archaerhodopsin-3 (aop3), found in Halorubrum sodomense.